A 142-amino-acid polypeptide reads, in one-letter code: Hemoglobin subunit alpha (142 aa).

One can recognise a Globin domain in the interval 2-142 (VLSPADKSNV…VSTVLTSKYR (141 aa)). Serine 4 bears the Phosphoserine mark. N6-succinyllysine is present on residues lysine 8 and lysine 12. Residue lysine 17 is modified to N6-acetyllysine; alternate. Residue lysine 17 is modified to N6-succinyllysine; alternate. Tyrosine 25 bears the Phosphotyrosine mark. Position 36 is a phosphoserine (serine 36). Lysine 41 carries the N6-succinyllysine modification. Serine 50 carries the phosphoserine modification. Histidine 59 is an O2 binding site. Position 88 (histidine 88) interacts with heme b. Position 103 is a phosphoserine (serine 103). Threonine 109 carries the post-translational modification Phosphothreonine. Residues serine 125 and serine 132 each carry the phosphoserine modification. 2 positions are modified to phosphothreonine: threonine 135 and threonine 138. Residue serine 139 is modified to Phosphoserine.

It belongs to the globin family. In terms of assembly, heterotetramer of two alpha chains and two beta chains. Red blood cells.

Involved in oxygen transport from the lung to the various peripheral tissues. Functionally, hemopressin acts as an antagonist peptide of the cannabinoid receptor CNR1. Hemopressin-binding efficiently blocks cannabinoid receptor CNR1 and subsequent signaling. This is Hemoglobin subunit alpha (HBA) from Ateles geoffroyi (Black-handed spider monkey).